A 226-amino-acid chain; its full sequence is 2-C-methyl-D-erythritol 4-phosphate cytidylyltransferase (226 aa).

Belongs to the IspD/TarI cytidylyltransferase family. IspD subfamily.

The enzyme catalyses 2-C-methyl-D-erythritol 4-phosphate + CTP + H(+) = 4-CDP-2-C-methyl-D-erythritol + diphosphate. It functions in the pathway isoprenoid biosynthesis; isopentenyl diphosphate biosynthesis via DXP pathway; isopentenyl diphosphate from 1-deoxy-D-xylulose 5-phosphate: step 2/6. Catalyzes the formation of 4-diphosphocytidyl-2-C-methyl-D-erythritol from CTP and 2-C-methyl-D-erythritol 4-phosphate (MEP). The protein is 2-C-methyl-D-erythritol 4-phosphate cytidylyltransferase of Bacillus cereus (strain ATCC 10987 / NRS 248).